A 337-amino-acid chain; its full sequence is MLARFERYPLTFGPTPIERLSRLSAHLGGKVDLYAKREDCNSGLAFGGNKLRKLEYIVPDAIASGADTLVSIGGVQSNHTRMVAAVAAKIGMKCRLVQEAWVPHEDAVYDRVGNIMLSRIMGADVRLVEDGFDIGIRSSWEQAIAEVKAAGGKPYAIPAGASVHKYGGLGYVGFAEEVRAQERELGFAFDYIVVCTVTGSTHAGMLVGFAKDGRERRVIGIDASATPAQTRAQVLEIARRTADLVDLGRELSADDVVLNEDYAYPIYGVPSAETKEAIRLCGRLEGMITDPVYEGKSMQGMIDLVRKGFFPAGAKVLYAHLGGAPALNGYAYAFRNG.

Lysine 50 carries the N6-(pyridoxal phosphate)lysine modification. Catalysis depends on serine 77, which acts as the Nucleophile.

Belongs to the ACC deaminase/D-cysteine desulfhydrase family. In terms of assembly, homotrimer. It depends on pyridoxal 5'-phosphate as a cofactor.

It carries out the reaction 1-aminocyclopropane-1-carboxylate + H2O = 2-oxobutanoate + NH4(+). In terms of biological role, catalyzes a cyclopropane ring-opening reaction, the irreversible conversion of 1-aminocyclopropane-1-carboxylate (ACC) to ammonia and alpha-ketobutyrate. Allows growth on ACC as a nitrogen source. This is 1-aminocyclopropane-1-carboxylate deaminase from Methylobacterium sp. (strain 4-46).